Consider the following 120-residue polypeptide: Phosphoribosyl-AMP cyclohydrolase (120 aa).

Aspartate 74 is a binding site for Mg(2+). Cysteine 75 serves as a coordination point for Zn(2+). Residues aspartate 76 and aspartate 78 each coordinate Mg(2+). Zn(2+)-binding residues include cysteine 91 and cysteine 98.

The protein belongs to the PRA-CH family. In terms of assembly, homodimer. Requires Mg(2+) as cofactor. Zn(2+) serves as cofactor.

The protein localises to the cytoplasm. It carries out the reaction 1-(5-phospho-beta-D-ribosyl)-5'-AMP + H2O = 1-(5-phospho-beta-D-ribosyl)-5-[(5-phospho-beta-D-ribosylamino)methylideneamino]imidazole-4-carboxamide. It functions in the pathway amino-acid biosynthesis; L-histidine biosynthesis; L-histidine from 5-phospho-alpha-D-ribose 1-diphosphate: step 3/9. In terms of biological role, catalyzes the hydrolysis of the adenine ring of phosphoribosyl-AMP. This chain is Phosphoribosyl-AMP cyclohydrolase, found in Natronomonas pharaonis (strain ATCC 35678 / DSM 2160 / CIP 103997 / JCM 8858 / NBRC 14720 / NCIMB 2260 / Gabara) (Halobacterium pharaonis).